The following is a 209-amino-acid chain: Uracil phosphoribosyltransferase (209 aa).

5-phospho-alpha-D-ribose 1-diphosphate is bound by residues Arg-79, Arg-104, and 131–139; that span reads DPMLATGGS. Uracil contacts are provided by residues Ile-194 and 199–201; that span reads GDA. Asp-200 is a 5-phospho-alpha-D-ribose 1-diphosphate binding site.

The protein belongs to the UPRTase family. Mg(2+) is required as a cofactor.

It carries out the reaction UMP + diphosphate = 5-phospho-alpha-D-ribose 1-diphosphate + uracil. It participates in pyrimidine metabolism; UMP biosynthesis via salvage pathway; UMP from uracil: step 1/1. Allosterically activated by GTP. Catalyzes the conversion of uracil and 5-phospho-alpha-D-ribose 1-diphosphate (PRPP) to UMP and diphosphate. This is Uracil phosphoribosyltransferase from Francisella tularensis subsp. novicida (strain U112).